The chain runs to 526 residues: piRNA biogenesis factor prde-1 (526 aa).

Residues 436–526 (EAKEEPIDKK…RRRGCEIRRK (91 aa)) are disordered. The segment covering 439 to 448 (EEPIDKKKDP) has biased composition (basic and acidic residues). Residues 458–467 (GKKRRGRKPK) are compositionally biased toward basic residues. A compositionally biased stretch (basic and acidic residues) spans 468–487 (KKDDPKMELKDEVKDLKDFV). Residues 489 to 498 (EESTSASSSA) show a composition bias toward low complexity.

Expressed in male and female germ cells.

Its subcellular location is the nucleus. The protein localises to the chromosome. Its function is as follows. Nuclear factor required for the production of piwi-interacting RNA (piRNA) precursors. Specifically required for piRNAs produced from loci associated with the Ruby motif. Promotes binding of the transcription factor snpc-4 at piRNA genomic clusters. Required for normal fertility. The protein is piRNA biogenesis factor prde-1 of Caenorhabditis elegans.